We begin with the raw amino-acid sequence, 296 residues long: Ribosomal RNA small subunit methyltransferase H (296 aa).

Residues 30-32 (GGH), Asp-49, Phe-77, Asp-95, and Gln-102 contribute to the S-adenosyl-L-methionine site.

The protein belongs to the methyltransferase superfamily. RsmH family.

The protein localises to the cytoplasm. It carries out the reaction cytidine(1402) in 16S rRNA + S-adenosyl-L-methionine = N(4)-methylcytidine(1402) in 16S rRNA + S-adenosyl-L-homocysteine + H(+). Its function is as follows. Specifically methylates the N4 position of cytidine in position 1402 (C1402) of 16S rRNA. The sequence is that of Ribosomal RNA small subunit methyltransferase H from Hydrogenobaculum sp. (strain Y04AAS1).